Here is a 90-residue protein sequence, read N- to C-terminus: Probable Fe(2+)-trafficking protein (90 aa).

This sequence belongs to the Fe(2+)-trafficking protein family. Monomer.

Its function is as follows. Could be a mediator in iron transactions between iron acquisition and iron-requiring processes, such as synthesis and/or repair of Fe-S clusters in biosynthetic enzymes. This is Probable Fe(2+)-trafficking protein from Hamiltonella defensa subsp. Acyrthosiphon pisum (strain 5AT).